The sequence spans 234 residues: Flagellar L-ring protein (234 aa).

The N-terminal stretch at 1 to 15 (MRYAVICMLLLAASG) is a signal peptide. The N-palmitoyl cysteine moiety is linked to residue cysteine 16. A lipid anchor (S-diacylglycerol cysteine) is attached at cysteine 16.

The protein belongs to the FlgH family. The basal body constitutes a major portion of the flagellar organelle and consists of four rings (L,P,S, and M) mounted on a central rod.

It is found in the cell outer membrane. The protein resides in the bacterial flagellum basal body. Functionally, assembles around the rod to form the L-ring and probably protects the motor/basal body from shearing forces during rotation. The protein is Flagellar L-ring protein of Oleidesulfovibrio alaskensis (strain ATCC BAA-1058 / DSM 17464 / G20) (Desulfovibrio alaskensis).